We begin with the raw amino-acid sequence, 130 residues long: Small ribosomal subunit protein uS9 (130 aa).

Residues 109 to 130 (RKKERKKYGQPGARAKFQYSKR) form a disordered region.

Belongs to the universal ribosomal protein uS9 family.

This is Small ribosomal subunit protein uS9 from Maridesulfovibrio salexigens (strain ATCC 14822 / DSM 2638 / NCIMB 8403 / VKM B-1763) (Desulfovibrio salexigens).